The following is an 87-amino-acid chain: Putative outer membrane protein ArbH (87 aa).

The signal sequence occupies residues 1–23 (MKIKNSYLVIASLLYPISFISTA).

It belongs to the porin LamB (TC 1.B.3) family.

It is found in the cell outer membrane. In terms of biological role, may be a sugar porin with a broad carbohydrate specificity. The polypeptide is Putative outer membrane protein ArbH (arbH) (Dickeya chrysanthemi (Pectobacterium chrysanthemi)).